The primary structure comprises 172 residues: RNA silencing suppressor p19 (172 aa).

Residues 153–172 are disordered; that stretch reads EGNVSGGSPEGIEAFEKESE.

It belongs to the tombusvirus protein p19 family. Homodimer.

In terms of biological role, viral suppressor of RNA silencing which binds specifically to silencing RNAs (siRNAs). Acts as a molecular caliper to specifically select siRNAs based on the length of the duplex region of the RNA. This is RNA silencing suppressor p19 from Pelargonium zonale (PeNSV).